We begin with the raw amino-acid sequence, 298 residues long: UDP-N-acetylenolpyruvoylglucosamine reductase (298 aa).

The region spanning K26–G191 is the FAD-binding PCMH-type domain. Residue R170 is part of the active site. The Proton donor role is filled by S220. E290 is an active-site residue.

This sequence belongs to the MurB family. Requires FAD as cofactor.

It localises to the cytoplasm. It carries out the reaction UDP-N-acetyl-alpha-D-muramate + NADP(+) = UDP-N-acetyl-3-O-(1-carboxyvinyl)-alpha-D-glucosamine + NADPH + H(+). It functions in the pathway cell wall biogenesis; peptidoglycan biosynthesis. Cell wall formation. This chain is UDP-N-acetylenolpyruvoylglucosamine reductase, found in Lactobacillus helveticus (strain DPC 4571).